Consider the following 395-residue polypeptide: MAFARAVRRPIGVFYYSVSSRFSSGNEYSTVASKFETLSQYKSSVPSGYTSLVRGFGNFIRSFSSEAPPAVSDQMSLIKQLRERTSAPIKDVKASLVECNWDLEAAQKDLRKRGKVLASKKSSRTAAEGMLAVAQNEGKVAVIELNCETDFVARNEIFQYLALAMAKHALLVESSSQQVSGVFPFGPELFEEFKLNLDHPKVNGETTVSNAVTEVAAIMGENVKFRRGFLMSKSSAGVLSAYLHTSPQPGLGRIAGIVSLEVEGENTQLEAIQRVGSELAMHVVAAKPLFLSKDLVSSEAMANEREILKSQAESTGKNQMAIEKIVEGRLRKYFEEVALMEQKFIVNDAINIKTLVDNLSKEVGSPVKVTDFLRVEVGEGIERLEASDEPVAQTA.

A mitochondrion-targeting transit peptide spans 1–63; sequence MAFARAVRRP…RGFGNFIRSF (63 aa).

It belongs to the EF-Ts family.

The protein resides in the mitochondrion. Functionally, associates with the EF-Tu.GDP complex and induces the exchange of GDP to GTP. It remains bound to the aminoacyl-tRNA.EF-Tu.GTP complex up to the GTP hydrolysis stage on the ribosome. The polypeptide is Elongation factor Ts, mitochondrial (Arabidopsis thaliana (Mouse-ear cress)).